Consider the following 778-residue polypeptide: pH-response regulator protein palH/prr-4 (778 aa).

The Extracellular portion of the chain corresponds to 1 to 108 (MEPRQLFSDP…DPFYASTFPQ (108 aa)). The chain crosses the membrane as a helical span at residues 109–129 (CYALAATTIIAYTLVIMLFIT). Residues 130 to 160 (PRSFLDGGVVVLGRKGFTNGGGGTSIGGRPW) lie on the Periplasmic side of the membrane. The helical transmembrane segment at 161-181 (LQKVAALSVAISLTIANAATF) threads the bilayer. Residues 182–201 (RAAEQQYSWGVQNAKQLQED) lie on the Extracellular side of the membrane. The helical transmembrane segment at 202–222 (VLGGAELKIIRIISDTFLWLA) threads the bilayer. Topologically, residues 223 to 237 (QAQTLIRLFPRQREK) are periplasmic. A helical transmembrane segment spans residues 238–258 (VIIKWTAFALITLDVIFQSLN). At 259–275 (SFKYGGSDLTRPKFTEA) the chain is on the extracellular side. The helical transmembrane segment at 276 to 296 (VPALSYLFALALGVLYAAWVL) threads the bilayer. Over 297–314 (YYSIMKKRYAFYHPLMKN) the chain is Periplasmic. A helical transmembrane segment spans residues 315–335 (MILVAVLSVVSILVPVVFFIL). Topologically, residues 336-341 (DISKPD) are extracellular. Residues 342-362 (FAGWGDYVRWVGAAAASVIVW) traverse the membrane as a helical segment. Residues 363-778 (EWVERIEALE…RSDSSTTPSP (416 aa)) lie on the Periplasmic side of the membrane. Disordered stretches follow at residues 394–499 (ASQS…DTTS), 514–605 (ELTS…DENS), and 660–778 (ELNH…TPSP). Basic and acidic residues predominate over residues 446–456 (HRTEPSSRNEP). A compositionally biased stretch (polar residues) spans 457-466 (NEGSSPVAET). Basic and acidic residues-rich tracts occupy residues 588–605 (FVTRSEPRSSKMQRDENS) and 661–675 (LNHSSREGTVREESR). The span at 720–732 (PIVTQGSFTNNRY) shows a compositional bias: polar residues. Over residues 749–759 (ARAPSQPQSPS) the composition is skewed to low complexity. The span at 769–778 (RSDSSTTPSP) shows a compositional bias: polar residues.

It belongs to the palH/RIM21 family.

The protein resides in the cell membrane. Required for the proteolytic cleavage of the transcription factor pacc-1 in response to alkaline ambient pH. This Neurospora crassa (strain ATCC 24698 / 74-OR23-1A / CBS 708.71 / DSM 1257 / FGSC 987) protein is pH-response regulator protein palH/prr-4 (prr-4).